The chain runs to 354 residues: Holliday junction branch migration complex subunit RuvB (354 aa).

Residues 1-183 (MTGDNLVSAY…FGFVAHLDFY (183 aa)) form a large ATPase domain (RuvB-L) region. Residues arginine 23, glycine 64, lysine 67, threonine 68, serine 69, 130–132 (EDF), arginine 173, tyrosine 183, and arginine 220 contribute to the ATP site. Threonine 68 serves as a coordination point for Mg(2+). Residues 184-254 (SPADLETLLH…AARAALLVYD (71 aa)) are small ATPAse domain (RuvB-S). A head domain (RuvB-H) region spans residues 257-354 (ALGLDRLDRQ…DLFSVEPDQP (98 aa)). Residues arginine 312 and arginine 317 each contribute to the DNA site. The interval 330 to 354 (TPPNGIFGSDAPPASDLFSVEPDQP) is disordered.

It belongs to the RuvB family. As to quaternary structure, homohexamer. Forms an RuvA(8)-RuvB(12)-Holliday junction (HJ) complex. HJ DNA is sandwiched between 2 RuvA tetramers; dsDNA enters through RuvA and exits via RuvB. An RuvB hexamer assembles on each DNA strand where it exits the tetramer. Each RuvB hexamer is contacted by two RuvA subunits (via domain III) on 2 adjacent RuvB subunits; this complex drives branch migration. In the full resolvosome a probable DNA-RuvA(4)-RuvB(12)-RuvC(2) complex forms which resolves the HJ.

It localises to the cytoplasm. The enzyme catalyses ATP + H2O = ADP + phosphate + H(+). Its function is as follows. The RuvA-RuvB-RuvC complex processes Holliday junction (HJ) DNA during genetic recombination and DNA repair, while the RuvA-RuvB complex plays an important role in the rescue of blocked DNA replication forks via replication fork reversal (RFR). RuvA specifically binds to HJ cruciform DNA, conferring on it an open structure. The RuvB hexamer acts as an ATP-dependent pump, pulling dsDNA into and through the RuvAB complex. RuvB forms 2 homohexamers on either side of HJ DNA bound by 1 or 2 RuvA tetramers; 4 subunits per hexamer contact DNA at a time. Coordinated motions by a converter formed by DNA-disengaged RuvB subunits stimulates ATP hydrolysis and nucleotide exchange. Immobilization of the converter enables RuvB to convert the ATP-contained energy into a lever motion, pulling 2 nucleotides of DNA out of the RuvA tetramer per ATP hydrolyzed, thus driving DNA branch migration. The RuvB motors rotate together with the DNA substrate, which together with the progressing nucleotide cycle form the mechanistic basis for DNA recombination by continuous HJ branch migration. Branch migration allows RuvC to scan DNA until it finds its consensus sequence, where it cleaves and resolves cruciform DNA. This is Holliday junction branch migration complex subunit RuvB from Salinispora arenicola (strain CNS-205).